The sequence spans 225 residues: UPF0758 protein Spea_3837 (225 aa).

Residues 102-224 (ILSDPDLTRD…IVSFAERGWI (123 aa)) form the MPN domain. 3 residues coordinate Zn(2+): histidine 173, histidine 175, and aspartate 186. The short motif at 173–186 (HNHPSGIAEPSTAD) is the JAMM motif element.

Belongs to the UPF0758 family.

This is UPF0758 protein Spea_3837 from Shewanella pealeana (strain ATCC 700345 / ANG-SQ1).